The following is an 858-amino-acid chain: Leucine--tRNA ligase (858 aa).

Residues 42–52 (PYPSGRLHMGH) carry the 'HIGH' region motif. Positions 618–622 (KMSKS) match the 'KMSKS' region motif. Lys621 contacts ATP.

Belongs to the class-I aminoacyl-tRNA synthetase family.

It localises to the cytoplasm. It catalyses the reaction tRNA(Leu) + L-leucine + ATP = L-leucyl-tRNA(Leu) + AMP + diphosphate. The chain is Leucine--tRNA ligase from Aliivibrio fischeri (strain ATCC 700601 / ES114) (Vibrio fischeri).